The sequence spans 289 residues: ATP phosphoribosyltransferase (289 aa).

Belongs to the ATP phosphoribosyltransferase family. Long subfamily. Mg(2+) serves as cofactor.

The protein resides in the cytoplasm. It carries out the reaction 1-(5-phospho-beta-D-ribosyl)-ATP + diphosphate = 5-phospho-alpha-D-ribose 1-diphosphate + ATP. It participates in amino-acid biosynthesis; L-histidine biosynthesis; L-histidine from 5-phospho-alpha-D-ribose 1-diphosphate: step 1/9. With respect to regulation, feedback inhibited by histidine. In terms of biological role, catalyzes the condensation of ATP and 5-phosphoribose 1-diphosphate to form N'-(5'-phosphoribosyl)-ATP (PR-ATP). Has a crucial role in the pathway because the rate of histidine biosynthesis seems to be controlled primarily by regulation of HisG enzymatic activity. The chain is ATP phosphoribosyltransferase from Pelotomaculum thermopropionicum (strain DSM 13744 / JCM 10971 / SI).